The sequence spans 608 residues: uncharacterized protein (608 aa).

The interval M1–R21 is disordered. T24 carries the phosphothreonine modification. Residue S27 is modified to Phosphoserine. Residues I55–I75 form a helical membrane-spanning segment. 9 N-linked (GlcNAc...) asparagine glycosylation sites follow: N115, N141, N169, N407, N425, N449, N453, N527, and N580.

It is found in the membrane. This is an uncharacterized protein from Saccharomyces cerevisiae (strain ATCC 204508 / S288c) (Baker's yeast).